Consider the following 37-residue polypeptide: Esculentin-2P (37 aa).

An intrachain disulfide couples C31 to C37.

Expressed by the skin glands.

Its subcellular location is the secreted. Functionally, antibacterial activity against Gram-negative bacterium E.coli. The sequence is that of Esculentin-2P from Lithobates pipiens (Northern leopard frog).